The primary structure comprises 553 residues: Glutamine--tRNA ligase (553 aa).

Positions 34-44 match the 'HIGH' region motif; it reads PEPNGYLHIGH. ATP contacts are provided by residues 35-37 and 41-47; these read EPN and HIGHAKS. The L-glutamine site is built by Asp-67 and Tyr-212. ATP is bound by residues Thr-231, 261–262, and 269–271; these read RL and MSK. A 'KMSKS' region motif is present at residues 268 to 272; it reads IMSKR.

Belongs to the class-I aminoacyl-tRNA synthetase family. Monomer.

The protein resides in the cytoplasm. It catalyses the reaction tRNA(Gln) + L-glutamine + ATP = L-glutaminyl-tRNA(Gln) + AMP + diphosphate. The chain is Glutamine--tRNA ligase from Tolumonas auensis (strain DSM 9187 / NBRC 110442 / TA 4).